The chain runs to 100 residues: Small ribosomal subunit protein uS17 (100 aa).

This sequence belongs to the universal ribosomal protein uS17 family. As to quaternary structure, part of the 30S ribosomal subunit.

One of the primary rRNA binding proteins, it binds specifically to the 5'-end of 16S ribosomal RNA. This chain is Small ribosomal subunit protein uS17, found in Fervidobacterium nodosum (strain ATCC 35602 / DSM 5306 / Rt17-B1).